The following is a 131-amino-acid chain: Sec-independent protein translocase protein TatB (131 aa).

A helical membrane pass occupies residues 2–22; sequence FDGIGFMELLLIGILGLVVLG. Polar residues-rich tracts occupy residues 68 to 83 and 116 to 131; these read ESQG…QDSI and AEKS…KPNG. Residues 68 to 131 are disordered; it reads ESQGLKNLSP…TGANSDKPNG (64 aa).

Belongs to the TatB family. The Tat system comprises two distinct complexes: a TatABC complex, containing multiple copies of TatA, TatB and TatC subunits, and a separate TatA complex, containing only TatA subunits. Substrates initially bind to the TatABC complex, which probably triggers association of the separate TatA complex to form the active translocon.

Its subcellular location is the cell inner membrane. Its function is as follows. Part of the twin-arginine translocation (Tat) system that transports large folded proteins containing a characteristic twin-arginine motif in their signal peptide across membranes. Together with TatC, TatB is part of a receptor directly interacting with Tat signal peptides. TatB may form an oligomeric binding site that transiently accommodates folded Tat precursor proteins before their translocation. The polypeptide is Sec-independent protein translocase protein TatB (Shewanella pealeana (strain ATCC 700345 / ANG-SQ1)).